Consider the following 521-residue polypeptide: Signal recognition particle protein (521 aa).

Residues 107–114, 196–200, and 254–257 contribute to the GTP site; these read GLQGSGKT, DTAGR, and TKLD. The tract at residues 436-505 is disordered; that stretch reads GGMGIPGMGR…MPDGLNELPP (70 aa). The segment covering 447 to 462 has biased composition (basic residues); that stretch reads SATRKSKGGKGKKRAR.

It belongs to the GTP-binding SRP family. SRP54 subfamily. In terms of assembly, part of the signal recognition particle protein translocation system, which is composed of SRP and FtsY.

The protein localises to the cytoplasm. The enzyme catalyses GTP + H2O = GDP + phosphate + H(+). Functionally, involved in targeting and insertion of nascent membrane proteins into the cytoplasmic membrane. Binds to the hydrophobic signal sequence of the ribosome-nascent chain (RNC) as it emerges from the ribosomes. The SRP-RNC complex is then targeted to the cytoplasmic membrane where it interacts with the SRP receptor FtsY. In Mycobacterium leprae (strain TN), this protein is Signal recognition particle protein.